A 64-amino-acid polypeptide reads, in one-letter code: Large ribosomal subunit protein bL35 (64 aa).

The protein belongs to the bacterial ribosomal protein bL35 family.

The chain is Large ribosomal subunit protein bL35 from Desulforudis audaxviator (strain MP104C).